A 295-amino-acid chain; its full sequence is uncharacterized protein (295 aa).

The protein resides in the plastid. The protein localises to the chloroplast. This is an uncharacterized protein from Euglena gracilis.